The following is a 660-amino-acid chain: ATPase WRNIP1 (660 aa).

The UBZ4-type zinc finger occupies 17–44 (QVQCPVCQQMMPAAHINSHLDRCLLLHP). Cys20, Cys23, His31, His35, and Cys39 together coordinate Zn(2+). Residues 50–191 (PAAGPHRAGE…DDPGHWDADA (142 aa)) are disordered. 2 positions are modified to phosphoserine: Ser65 and Ser75. A compositionally biased stretch (polar residues) spans 76–89 (ESSALKQPATPTAA). Residue Lys81 forms a Glycyl lysine isopeptide (Lys-Gly) (interchain with G-Cter in ubiquitin) linkage. Thr85 carries the phosphothreonine modification. A phosphoserine mark is found at Ser91 and Ser92. Over residues 92 to 104 (SEGEGEEGDDGGE) the composition is skewed to acidic residues. At Thr116 the chain carries Phosphothreonine. The segment covering 135–155 (ARKGLGKRPAAAAAAGSASPR) has biased composition (low complexity). Residue Lys141 forms a Glycyl lysine isopeptide (Lys-Gly) (interchain with G-Cter in ubiquitin) linkage. The residue at position 153 (Ser153) is a Phosphoserine. Positions 159-182 (ETEAQEEEEAGVDGDGDADVDGED) are enriched in acidic residues. Residue Lys220 forms a Glycyl lysine isopeptide (Lys-Gly) (interchain with G-Cter in ubiquitin) linkage. An ATP-binding site is contributed by 265 to 271 (PGCGKTT). Residues Lys296, Lys305, Lys311, Lys317, and Lys330 each participate in a glycyl lysine isopeptide (Lys-Gly) (interchain with G-Cter in ubiquitin) cross-link. A Glycyl lysine isopeptide (Lys-Gly) (interchain with G-Cter in SUMO2); alternate cross-link involves residue Lys477. Residue Lys477 forms a Glycyl lysine isopeptide (Lys-Gly) (interchain with G-Cter in ubiquitin); alternate linkage. 2 positions are modified to phosphotyrosine: Tyr529 and Tyr557. Lys622 is covalently cross-linked (Glycyl lysine isopeptide (Lys-Gly) (interchain with G-Cter in ubiquitin)). A Glycyl lysine isopeptide (Lys-Gly) (interchain with G-Cter in ubiquitin); alternate cross-link involves residue Lys628. At Lys628 the chain carries N6-acetyllysine; alternate. A Glycyl lysine isopeptide (Lys-Gly) (interchain with G-Cter in ubiquitin) cross-link involves residue Lys631.

It belongs to the AAA ATPase family. RarA/MGS1/WRNIP1 subfamily. Forms homooligomers, possibly octamers. Directly interacts with POLD1, POLD2 and POLD4. Interacts with the N-terminal domain of WRN. Interacts (via UBZ4-type zinc finger) with monoubiquitin and polyubiquitin. Interacts with TRIM14 and PPP6C; these interactions positively regulate the RIGI signaling pathway. Post-translationally, sumoylated with SUMO1 and SUMO2/3. As to expression, ubiquitously expressed.

It is found in the nucleus. The protein localises to the cytoplasm. It catalyses the reaction ATP + H2O = ADP + phosphate + H(+). Functionally, functions as a modulator of initiation or reinitiation events during DNA polymerase delta-mediated DNA synthesis. In the presence of ATP, stimulation of DNA polymerase delta-mediated DNA synthesis is decreased. Also plays a role in the innate immune defense against viruses. Stabilizes the RIGI dsRNA interaction and promotes RIGI 'Lys-63'-linked polyubiquitination. In turn, RIGI transmits the signal through mitochondrial MAVS. This is ATPase WRNIP1 from Rattus norvegicus (Rat).